The sequence spans 409 residues: TM2 domain-containing protein ZK858.5 (409 aa).

The TM2 domain occupies Val8–Phe55. A run of 6 helical transmembrane segments spans residues Pro10–Leu30, Phe37–Phe57, Val104–Trp124, Ile127–Ile147, Met168–Ser190, and His209–Ser229.

Belongs to the TM2 family.

The protein localises to the membrane. In Caenorhabditis elegans, this protein is TM2 domain-containing protein ZK858.5.